The following is a 250-amino-acid chain: HTH-type transcriptional regulator KipR (250 aa).

Residues 5-65 (NKTVVKSMAL…DASGAYSLGL (61 aa)) form the HTH iclR-type domain. The segment at residues 26 to 45 (LSELVSLTGMPKTSVHRMVS) is a DNA-binding region (H-T-H motif). One can recognise an IclR-ED domain in the interval 80 to 249 (IRKIAKPVME…ALQISRKIGY (170 aa)).

Its function is as follows. Transcriptional repressor of the kip gene-containing operon. The polypeptide is HTH-type transcriptional regulator KipR (kipR) (Bacillus subtilis (strain 168)).